Consider the following 204-residue polypeptide: MNFLNFSILIFAYLLGSINSAIIVCYIFRLPSPRSVGSGNPGTTNVLRIGGKVPAAITLIFDILKGLVPVVIAKVLTGNEFITACTALYAILGHIFPIFFGFKGGKGIATLVGTLFGFSWILGLIFVITWLCVAIITRYSSLSALVATFIASFSVIFTSDLQVAAPFLIIAIIILVKHKGNIQRLISGQESKIGDKAKAKNDSN.

5 helical membrane passes run 8–28 (ILIFAYLLGSINSAIIVCYIF), 53–73 (VPAAITLIFDILKGLVPVVIA), 81–101 (FITACTALYAILGHIFPIFFG), 116–136 (FGFSWILGLIFVITWLCVAII), and 155–175 (VIFTSDLQVAAPFLIIAIIIL).

Belongs to the PlsY family. As to quaternary structure, probably interacts with PlsX.

It is found in the cell inner membrane. It carries out the reaction an acyl phosphate + sn-glycerol 3-phosphate = a 1-acyl-sn-glycero-3-phosphate + phosphate. Its pathway is lipid metabolism; phospholipid metabolism. Its function is as follows. Catalyzes the transfer of an acyl group from acyl-phosphate (acyl-PO(4)) to glycerol-3-phosphate (G3P) to form lysophosphatidic acid (LPA). This enzyme utilizes acyl-phosphate as fatty acyl donor, but not acyl-CoA or acyl-ACP. In Francisella tularensis subsp. mediasiatica (strain FSC147), this protein is Glycerol-3-phosphate acyltransferase.